The chain runs to 380 residues: Glucose-1-phosphate adenylyltransferase (380 aa).

Alpha-D-glucose 1-phosphate contacts are provided by residues Gly164, 179–180 (EK), and Ser190.

The protein belongs to the bacterial/plant glucose-1-phosphate adenylyltransferase family. Homotetramer.

It catalyses the reaction alpha-D-glucose 1-phosphate + ATP + H(+) = ADP-alpha-D-glucose + diphosphate. It functions in the pathway glycan biosynthesis; glycogen biosynthesis. Its function is as follows. Involved in the biosynthesis of ADP-glucose, a building block required for the elongation reactions to produce glycogen. Catalyzes the reaction between ATP and alpha-D-glucose 1-phosphate (G1P) to produce pyrophosphate and ADP-Glc. This is Glucose-1-phosphate adenylyltransferase from Lactococcus lactis subsp. cremoris (strain MG1363).